We begin with the raw amino-acid sequence, 297 residues long: XIAP-associated factor 1 (297 aa).

The TRAF-type zinc-finger motif lies at 22 to 99 (LHEAHCLMYL…QLAVRLNKVD (78 aa)). Residues 178–255 (AVTPSPVGKP…NGKLRASSPV (78 aa)) are disordered. The span at 202–212 (QTSKAEKDVRP) shows a compositional bias: basic and acidic residues. Residues 229-245 (RQAPRGTNKTTNLSLKS) are compositionally biased toward polar residues.

In terms of assembly, interacts with BIRC1, BIRC2, BIRC3, BIRC4, BIRC7 and BIRC8. Part of an complex consisting of BIRC4, XAF1 and BIRC5; the complex formation requires IFN-beta stimulation. Interacts with RNF114, the interaction increases XAF1 stability and proapoptotic effects, and may regulate IFN signaling.

It is found in the cytoplasm. Its subcellular location is the nucleus. It localises to the mitochondrion. Seems to function as a negative regulator of members of the IAP (inhibitor of apoptosis protein) family. Inhibits anti-caspase activity of BIRC4. Induces cleavage and inactivation of BIRC4 independent of caspase activation. Mediates TNF-alpha-induced apoptosis and is involved in apoptosis in trophoblast cells. May inhibit BIRC4 indirectly by activating the mitochondrial apoptosis pathway. After translocation to mitochondria, promotes translocation of BAX to mitochondria and cytochrome c release from mitochondria. Seems to promote the redistribution of BIRC4 from the cytoplasm to the nucleus, probably independent of BIRC4 inactivation which seems to occur in the cytoplasm. The BIRC4-XAF1 complex mediates down-regulation of BIRC5/survivin; the process requires the E3 ligase activity of BIRC4. Seems to be involved in cellular sensitivity to the proapoptotic actions of TRAIL. May be a tumor suppressor by mediating apoptosis resistance of cancer cells. In Bos taurus (Bovine), this protein is XIAP-associated factor 1 (XAF1).